Here is a 453-residue protein sequence, read N- to C-terminus: Succinate-semialdehyde dehydrogenase (acetylating) (453 aa).

Position 188-193 (188-193) interacts with NADP(+); it reads ATGGAG. Cysteine 242 is a catalytic residue.

In terms of assembly, homodimer.

It carries out the reaction succinate semialdehyde + NADP(+) + CoA = succinyl-CoA + NADPH + H(+). Functionally, catalyzes the reduction of succinate semialdehyde to succinyl-CoA. The enzyme is specific for succinate semialdehyde and succinyl-CoA, and only shows low activity with palmitoyl-CoA. There is no activity with NAD(+) as cosubstrate. The chain is Succinate-semialdehyde dehydrogenase (acetylating) (sucD) from Clostridium kluyveri (strain ATCC 8527 / DSM 555 / NBRC 12016 / NCIMB 10680 / K1).